Consider the following 166-residue polypeptide: Cytochrome P450 regulator dap1 (166 aa).

A helical membrane pass occupies residues 4–21 (TQVVFIVTLFLYLLITRW). Positions 42–145 (DYTPAELKEY…QKYQAVGRLI (104 aa)) constitute a Cytochrome b5 heme-binding domain. S108 carries the phosphoserine modification. Position 138 (Y138) interacts with heme.

Belongs to the cytochrome b5 family. MAPR subfamily. As to quaternary structure, interacts with erg5 and erg11.

It localises to the endoplasmic reticulum. It is found in the membrane. Required for sterol biosynthesis. Functions as a positive regulator of cytochrome P450 enzymes erg5 and erg11. Function requires bound heme. The polypeptide is Cytochrome P450 regulator dap1 (dap1) (Schizosaccharomyces pombe (strain 972 / ATCC 24843) (Fission yeast)).